Here is a 1728-residue protein sequence, read N- to C-terminus: Hybrid PKS-NRPS synthetase TAS1 (1728 aa).

Residues 153–499 form a condensation (C) domain region; the sequence is SPLSKAQMAL…MDPTLLDFKV (347 aa). The interval 608–1002 is adenylation (A) domain; sequence KARAASQPDL…KLHIQGRIGN (395 aa). The Carrier domain occupies 1141-1219; sequence MLRRHLTAEV…KQVDCLMGIV (79 aa). Position 1177 is an O-(pantetheine 4'-phosphoryl)serine (Ser1177). The segment at 1225–1256 is disordered; that stretch reads LGSEPTGGSSSRSQSRRSAETSSSSTSAPSSV. 2 stretches are compositionally biased toward low complexity: residues 1226–1237 and 1244–1255; these read GSEPTGGSSSRS and ETSSSSTSAPSS. The region spanning 1262-1714 is the Ketosynthase family 3 (KS3) domain; the sequence is RNLYAIVGIS…SDATWFVIST (453 aa). Residues Cys1436, His1579, and Asn1633 each act as for beta-ketoacyl synthase activity in the active site.

It in the N-terminal section; belongs to the NRP synthetase family. The cofactor is pantetheine 4'-phosphate.

It catalyses the reaction acetoacetyl-CoA + L-isoleucine + ATP = tenuazonic acid + AMP + diphosphate + CoA + 2 H(+). Functionally, hybrid PKS-NRPS synthetase that mediates the biosynthesis of the toxin tenuazonic acid (TeA), an inhibitor of protein biosynthesis on ribosomes by suppressing the release of new protein. TAS1 alone is sufficient for TeA synthesis via the condensation of isoleucine (Ile) with acetoacetyl-CoA by the N-terminal NRPS module and subsequent cyclization conducted by the C-terminal KS domain. The sequence is that of Hybrid PKS-NRPS synthetase TAS1 from Pyricularia oryzae (strain 70-15 / ATCC MYA-4617 / FGSC 8958) (Rice blast fungus).